The chain runs to 214 residues: tRNA (guanine-N(7)-)-methyltransferase (214 aa).

Residues glutamate 44, glutamate 69, aspartate 96, and aspartate 118 each coordinate S-adenosyl-L-methionine. Aspartate 118 is a catalytic residue. Residues lysine 122, aspartate 154, and 191–194 (TEYE) each bind substrate.

Belongs to the class I-like SAM-binding methyltransferase superfamily. TrmB family.

It carries out the reaction guanosine(46) in tRNA + S-adenosyl-L-methionine = N(7)-methylguanosine(46) in tRNA + S-adenosyl-L-homocysteine. The protein operates within tRNA modification; N(7)-methylguanine-tRNA biosynthesis. In terms of biological role, catalyzes the formation of N(7)-methylguanine at position 46 (m7G46) in tRNA. The chain is tRNA (guanine-N(7)-)-methyltransferase from Listeria monocytogenes serotype 4b (strain F2365).